Reading from the N-terminus, the 314-residue chain is Olfactory receptor 4Q2 (314 aa).

Topologically, residues 1–26 are extracellular; it reads MDKNQTEVMREFFLSGFSQTPSIEAG. N4 carries N-linked (GlcNAc...) asparagine glycosylation. The chain crosses the membrane as a helical span at residues 27–47; the sequence is LFVLFLFFYMSIWVGNVLIMV. At 48–61 the chain is on the cytoplasmic side; sequence TVASDKYLNSSPMY. The chain crosses the membrane as a helical span at residues 62–84; the sequence is FLLGNLSFLDLCYSTVTTPKLLA. Topologically, residues 85–98 are extracellular; that stretch reads DFFNHEKLISYDQC. A disulfide bond links C98 and C181. The chain crosses the membrane as a helical span at residues 99 to 119; it reads IVQLFFLHFVGAAEMFLLTVM. Topologically, residues 120 to 142 are cytoplasmic; the sequence is AYDRYVAICRPLHYTTVMSRGLC. A helical membrane pass occupies residues 143–163; it reads CVLVAASWMGGFVHSTVQTIL. The Extracellular segment spans residues 164-196; the sequence is TVHLPFCGPNQVENTFFCDVPPVIKLACADTFV. Residues 197–217 traverse the membrane as a helical segment; the sequence is IELLMVSNSGLISTISFVVLI. Topologically, residues 218-236 are cytoplasmic; that stretch reads SSYTTILVKIRSKEGRRKA. A helical transmembrane segment spans residues 237–257; sequence LSTCASHLMVVTLFFGPCIFI. At 258 to 268 the chain is on the extracellular side; that stretch reads YARPFSTFSVD. The chain crosses the membrane as a helical span at residues 269 to 289; it reads KMVSVLYNVITPMLNPLIYTL. Residues 290 to 314 lie on the Cytoplasmic side of the membrane; it reads RNKEVKSAMQKLWVRNGLTWKKQET.

It belongs to the G-protein coupled receptor 1 family.

It localises to the cell membrane. Odorant receptor. The chain is Olfactory receptor 4Q2 (OR4Q2) from Homo sapiens (Human).